The chain runs to 568 residues: Potassium-transporting ATPase potassium-binding subunit (568 aa).

The next 10 helical transmembrane spans lie at 3-23 (TEILGVVAQVALMVILAYPLG), 64-84 (FLKALLILNAFWFVWGMVLLV), 133-153 (FVIMLFQFITAATGMAAMAGI), 179-199 (ILLPLSLIVGFILILQGTPMG), 255-275 (MVECWSILIIPMAMVLALGFY), 281-301 (LAYSIFGVMLFAFLVGVCINV), 375-395 (FGGVGVGWMNYYTFIIIAVFI), 418-438 (IATIVALLHPFVILVFTAISS), 497-517 (IVLILSRFLPIIGQVAIAGLL), and 536-556 (TFGIMTFVVIFIVAALSFFPV).

Belongs to the KdpA family. The system is composed of three essential subunits: KdpA, KdpB and KdpC.

The protein localises to the cell inner membrane. Its function is as follows. Part of the high-affinity ATP-driven potassium transport (or Kdp) system, which catalyzes the hydrolysis of ATP coupled with the electrogenic transport of potassium into the cytoplasm. This subunit binds the periplasmic potassium ions and delivers the ions to the membrane domain of KdpB through an intramembrane tunnel. The polypeptide is Potassium-transporting ATPase potassium-binding subunit (Bacteroides thetaiotaomicron (strain ATCC 29148 / DSM 2079 / JCM 5827 / CCUG 10774 / NCTC 10582 / VPI-5482 / E50)).